We begin with the raw amino-acid sequence, 486 residues long: Hydrogenobyrinate a,c-diamide synthase (486 aa).

Over residues 254–272 (SPPPPLPVPSPGAAPPDPL) the composition is skewed to pro residues. The interval 254-284 (SPPPPLPVPSPGAAPPDPLVRPGRPRPQAPD) is disordered. In terms of domain architecture, GATase cobBQ-type spans 289 to 474 (RVAMASGAAF…LHTHWAAEPG (186 aa)). Catalysis depends on Cys372, which acts as the Nucleophile.

This sequence belongs to the CobB/CbiA family. The cofactor is Mg(2+).

It carries out the reaction hydrogenobyrinate + 2 L-glutamine + 2 ATP + 2 H2O = hydrogenobyrinate a,c-diamide + 2 L-glutamate + 2 ADP + 2 phosphate + 2 H(+). Its pathway is cofactor biosynthesis; adenosylcobalamin biosynthesis; cob(II)yrinate a,c-diamide from precorrin-2 (aerobic route): step 9/10. Catalyzes the ATP-dependent amidation of the two carboxylate groups at positions a and c of hydrogenobyrinate, using either L-glutamine or ammonia as the nitrogen source. This is Hydrogenobyrinate a,c-diamide synthase from Streptomyces coelicolor (strain ATCC BAA-471 / A3(2) / M145).